A 150-amino-acid polypeptide reads, in one-letter code: Transmembrane protein 35B (150 aa).

A signal peptide spans 1-21 (MSFRVGVLRVLLGVFFALTGA). The next 3 membrane-spanning stretches (helical) occupy residues 62–82 (TAVGWLELLAGLLLVVGPPVL), 84–104 (EISNVLLILLMMGAVFTLVVL), and 111–131 (YVPAAVCLGLLLLLDSCHFLA).

The protein belongs to the DoxX family.

The protein resides in the membrane. The chain is Transmembrane protein 35B from Mus musculus (Mouse).